We begin with the raw amino-acid sequence, 234 residues long: uncharacterized protein (234 aa).

The next 2 membrane-spanning stretches (helical) occupy residues leucine 20–isoleucine 40 and valine 176–leucine 196.

It belongs to the CpsC/CapA family.

It is found in the cell membrane. This is an uncharacterized protein from Bacillus subtilis (strain 168).